The sequence spans 264 residues: Protein-lysine methyltransferase METTL21C (264 aa).

The span at 1–10 shows a compositional bias: polar residues; that stretch reads MDVCLSSAQQ. Residues 1-46 form a disordered region; that stretch reads MDVCLSSAQQPGRRGEGLSSPGGWLEAEKKGAPQKDSTGGVLEESN. Residues tryptophan 92, 120-122, aspartate 141, tryptophan 172, and serine 193 each bind S-adenosyl-L-methionine; that span reads GAG.

It belongs to the methyltransferase superfamily. METTL21 family. Interacts with members of the heat shock protein 70 families; these proteins may possibly be methylation substrates for the enzyme.

Its subcellular location is the nucleus. It localises to the cytoplasm. It carries out the reaction L-lysyl-[protein] + S-adenosyl-L-methionine = N(6)-methyl-L-lysyl-[protein] + S-adenosyl-L-homocysteine + H(+). The enzyme catalyses N(6)-methyl-L-lysyl-[protein] + S-adenosyl-L-methionine = N(6),N(6)-dimethyl-L-lysyl-[protein] + S-adenosyl-L-homocysteine + H(+). The catalysed reaction is N(6),N(6)-dimethyl-L-lysyl-[protein] + S-adenosyl-L-methionine = N(6),N(6),N(6)-trimethyl-L-lysyl-[protein] + S-adenosyl-L-homocysteine + H(+). Its function is as follows. Protein-lysine N-methyltransferase using S-adenosyl-L-methionine as methyl donor. Mono-di and trimethylates 'Lys-943' of AARS1. The chain is Protein-lysine methyltransferase METTL21C from Homo sapiens (Human).